Reading from the N-terminus, the 256-residue chain is 5-oxoprolinase subunit A (256 aa).

It belongs to the LamB/PxpA family. Forms a complex composed of PxpA, PxpB and PxpC.

It carries out the reaction 5-oxo-L-proline + ATP + 2 H2O = L-glutamate + ADP + phosphate + H(+). Catalyzes the cleavage of 5-oxoproline to form L-glutamate coupled to the hydrolysis of ATP to ADP and inorganic phosphate. This is 5-oxoprolinase subunit A from Cutibacterium acnes (strain DSM 16379 / KPA171202) (Propionibacterium acnes).